The sequence spans 360 residues: MQHAPLNFVPDAAKVPPTPGQSPNARWSREAIEALFALPFNDLLFQAQQVHRAHFDANAVQLSTLLSIKTGGCPEDCSYCPQSARYDTGVEAEKLMPIDTVLEAAARAKQNGASRFCMGAAWRNPKPHQLDAVADMVRGVKAMGLETCVTLGMLKQEQAQQLKDAGLDYYNHNLDTAPEFYGEIITTRTYQDRLDTLEHVRDAGINVCCGGIVGLGESRHERAGLVAELANMEPYPDSVPINNLVKVEGTPLAGNEALDPFEFVRTIAVARITMPKAMVRLSAGREAMDDALQALCFMAGANSIFYGEKLLTTDNPEADADRKLLARLGMRVEVQDHLHQAEGAQHSHSSHCHIDITPAD.

The segment at 1-25 (MQHAPLNFVPDAAKVPPTPGQSPNA) is disordered. The Radical SAM core domain maps to 58 to 285 (NAVQLSTLLS…KAMVRLSAGR (228 aa)). The [4Fe-4S] cluster site is built by Cys-73, Cys-77, and Cys-80. [2Fe-2S] cluster contacts are provided by Cys-117, Cys-148, Cys-208, and Arg-280. The segment at 340–360 (QAEGAQHSHSSHCHIDITPAD) is disordered.

It belongs to the radical SAM superfamily. Biotin synthase family. As to quaternary structure, homodimer. [4Fe-4S] cluster serves as cofactor. The cofactor is [2Fe-2S] cluster.

It carries out the reaction (4R,5S)-dethiobiotin + (sulfur carrier)-SH + 2 reduced [2Fe-2S]-[ferredoxin] + 2 S-adenosyl-L-methionine = (sulfur carrier)-H + biotin + 2 5'-deoxyadenosine + 2 L-methionine + 2 oxidized [2Fe-2S]-[ferredoxin]. Its pathway is cofactor biosynthesis; biotin biosynthesis; biotin from 7,8-diaminononanoate: step 2/2. Catalyzes the conversion of dethiobiotin (DTB) to biotin by the insertion of a sulfur atom into dethiobiotin via a radical-based mechanism. The protein is Biotin synthase of Ralstonia nicotianae (strain ATCC BAA-1114 / GMI1000) (Ralstonia solanacearum).